A 314-amino-acid polypeptide reads, in one-letter code: Olfactory receptor 5P51 (314 aa).

The Extracellular segment spans residues 1-28; that stretch reads MAFLEDGNHTAVTEFVLFGLTDDPVLRV. Asn8 carries an N-linked (GlcNAc...) asparagine glycan. Residues 29 to 49 form a helical membrane-spanning segment; the sequence is ILFIIFLCIYLVNVSGNLSTI. Residues 50 to 57 are Cytoplasmic-facing; it reads LLIRVSSQ. A helical transmembrane segment spans residues 58–78; the sequence is LHHPMYFFLSHLASVDVGYSS. The Extracellular portion of the chain corresponds to 79 to 102; sequence TVTPKMLANFLLERSTISYLGCTI. Cys100 and Cys192 form a disulfide bridge. Residues 103–123 traverse the membrane as a helical segment; sequence QLFSGAFVGTLECFLLATMAY. The Cytoplasmic segment spans residues 124 to 136; sequence DRFIAICNPLLYS. Residues 137 to 157 form a helical membrane-spanning segment; that stretch reads TKMSTQVCIQLLVGSYIGGFL. The Extracellular portion of the chain corresponds to 158–199; the sequence is NASSFLLSFFPLLFCGPNRVNHYSCDLTPLIELSCSGSNVPI. Residues 200 to 220 form a helical membrane-spanning segment; the sequence is VPASFCSAFVIIVTVSVIAIS. The Cytoplasmic segment spans residues 221 to 240; the sequence is YTYILITILKMRSTEGRQKA. A helical membrane pass occupies residues 241 to 261; sequence FSTCTSHLTAVTLYYGTVTFI. Over 262–274 the chain is Extracellular; that stretch reads YVMPKSSYSTDQN. The chain crosses the membrane as a helical span at residues 275–295; that stretch reads KVVSVFYTVVIPMLNPIIYSL. The Cytoplasmic portion of the chain corresponds to 296 to 314; it reads RNNEIKGALKRQLARKIFS.

This sequence belongs to the G-protein coupled receptor 1 family.

It localises to the cell membrane. Its function is as follows. Potential odorant receptor. The sequence is that of Olfactory receptor 5P51 from Mus musculus (Mouse).